Reading from the N-terminus, the 423-residue chain is Type II methyltransferase M.BamHI (423 aa).

The span at D397 to N414 shows a compositional bias: basic and acidic residues. The segment at D397–E423 is disordered.

Belongs to the N(4)/N(6)-methyltransferase family.

It carries out the reaction a 2'-deoxycytidine in DNA + S-adenosyl-L-methionine = an N(4)-methyl-2'-deoxycytidine in DNA + S-adenosyl-L-homocysteine + H(+). In terms of biological role, a beta subtype methylase, recognizes the double-stranded sequence 5'-GGATCC-3', methylates C-5 on both strands, and protects the DNA from cleavage by the BamHI endonuclease. The chain is Type II methyltransferase M.BamHI from Bacillus amyloliquefaciens (Bacillus velezensis).